A 369-amino-acid polypeptide reads, in one-letter code: Cobalt-precorrin-5B C(1)-methyltransferase (369 aa).

The protein belongs to the CbiD family.

It carries out the reaction Co-precorrin-5B + S-adenosyl-L-methionine = Co-precorrin-6A + S-adenosyl-L-homocysteine. The protein operates within cofactor biosynthesis; adenosylcobalamin biosynthesis; cob(II)yrinate a,c-diamide from sirohydrochlorin (anaerobic route): step 6/10. In terms of biological role, catalyzes the methylation of C-1 in cobalt-precorrin-5B to form cobalt-precorrin-6A. The chain is Cobalt-precorrin-5B C(1)-methyltransferase from Brucella melitensis biotype 1 (strain ATCC 23456 / CCUG 17765 / NCTC 10094 / 16M).